The primary structure comprises 214 residues: Nascent polypeptide-associated complex subunit alpha (214 aa).

Disordered stretches follow at residues 1 to 57 (MSNP…NEKK) and 119 to 179 (ASAA…EDKD). Residues 22–38 (AEDEGSDSSDSEGEGEV) show a composition bias toward acidic residues. The NAC-A/B domain occupies 52 to 117 (SRNEKKARKS…AKIEDLNSQA (66 aa)). Residues 119–128 (ASAAAQLAAQ) are compositionally biased toward low complexity. Residues 129 to 159 (ESHDHAGHDHSGHDHSHDHGKGKAVDTGDEK) are compositionally biased toward basic and acidic residues. Positions 160-171 (KEEEEDDTEEVD) are enriched in acidic residues. The UBA domain maps to 175–214 (LEDKDIELVMTQASVSRNKAVKALKENDNDIVNSIMALSI).

It belongs to the NAC-alpha family. Part of the nascent polypeptide-associated complex (NAC), consisting of EGD2 and EGD1. NAC associates with ribosomes via EGD1.

The protein resides in the cytoplasm. The protein localises to the nucleus. Component of the nascent polypeptide-associated complex (NAC), a dynamic component of the ribosomal exit tunnel, protecting the emerging polypeptides from interaction with other cytoplasmic proteins to ensure appropriate nascent protein targeting. The NAC complex also promotes mitochondrial protein import by enhancing productive ribosome interactions with the outer mitochondrial membrane and blocks the inappropriate interaction of ribosomes translating non-secretory nascent polypeptides with translocation sites in the membrane of the endoplasmic reticulum. EGD2 may also be involved in transcription regulation. This is Nascent polypeptide-associated complex subunit alpha (egd2) from Sclerotinia sclerotiorum (strain ATCC 18683 / 1980 / Ss-1) (White mold).